The primary structure comprises 549 residues: CTP synthase (549 aa).

Positions 1–272 (MPPKSTTTKH…DAYVVRKLDL (272 aa)) are amidoligase domain. Residue serine 19 participates in CTP binding. Residue serine 19 coordinates UTP. ATP contacts are provided by residues 20–25 (SLGKGL) and aspartate 77. The Mg(2+) site is built by aspartate 77 and glutamate 146. CTP contacts are provided by residues 153–155 (DIE), 193–198 (KTKPTQ), and lysine 229. UTP-binding positions include 193-198 (KTKPTQ) and lysine 229. The 252-residue stretch at 297 to 548 (NLALVGKYID…VKAAVERKTG (252 aa)) folds into the Glutamine amidotransferase type-1 domain. Glycine 360 is an L-glutamine binding site. Residue cysteine 387 is the Nucleophile; for glutamine hydrolysis of the active site. Residues 388–391 (LGLQ), glutamate 411, and arginine 473 contribute to the L-glutamine site. Residues histidine 521 and glutamate 523 contribute to the active site.

It belongs to the CTP synthase family. As to quaternary structure, homotetramer.

It catalyses the reaction UTP + L-glutamine + ATP + H2O = CTP + L-glutamate + ADP + phosphate + 2 H(+). It carries out the reaction L-glutamine + H2O = L-glutamate + NH4(+). The enzyme catalyses UTP + NH4(+) + ATP = CTP + ADP + phosphate + 2 H(+). The protein operates within pyrimidine metabolism; CTP biosynthesis via de novo pathway; CTP from UDP: step 2/2. Allosterically activated by GTP, when glutamine is the substrate; GTP has no effect on the reaction when ammonia is the substrate. The allosteric effector GTP functions by stabilizing the protein conformation that binds the tetrahedral intermediate(s) formed during glutamine hydrolysis. Inhibited by the product CTP, via allosteric rather than competitive inhibition. Functionally, catalyzes the ATP-dependent amination of UTP to CTP with either L-glutamine or ammonia as the source of nitrogen. Regulates intracellular CTP levels through interactions with the four ribonucleotide triphosphates. The sequence is that of CTP synthase from Streptomyces avermitilis (strain ATCC 31267 / DSM 46492 / JCM 5070 / NBRC 14893 / NCIMB 12804 / NRRL 8165 / MA-4680).